Here is a 222-residue protein sequence, read N- to C-terminus: UPF0758 protein YicR (222 aa).

The 123-residue stretch at 100–222 (PLLSPEMTRE…NVSFAERGWI (123 aa)) folds into the MPN domain. Zn(2+)-binding residues include His-171, His-173, and Asp-184. Positions 171-184 (HNHPSGCAEPSKAD) match the JAMM motif motif.

It belongs to the UPF0758 family. YicR subfamily.

This chain is UPF0758 protein YicR, found in Shigella boydii serotype 18 (strain CDC 3083-94 / BS512).